We begin with the raw amino-acid sequence, 363 residues long: Wortmanamides biosynthesis cluster protein C (363 aa).

7 helical membrane-spanning segments follow: residues 15 to 35 (FVTLLIFTPLGIVVTALRFVA), 48 to 68 (WLAVIATIFFILTNLAGLMAI), 95 to 115 (IAGLFFYFAQTLSVKLSILAF), 129 to 149 (ICIYLLAAAQTILFIAFCIFQ), 175 to 195 (ILGGELPNSLVDFAMVILAMI), 210 to 230 (VTVLFGLGFVVGIIGFVKIAV), and 237 to 257 (LYAFSMIALWTGVQMFTALLC). Positions 293 to 312 (SSSKNSRKHGPYDSDQSPGP) are disordered. Asn-321 carries an N-linked (GlcNAc...) asparagine glycan. The disordered stretch occupies residues 344 to 363 (SPITHPQAYSKQTTRQFDVV).

It belongs to the SAT4 family.

It localises to the membrane. Its pathway is secondary metabolite biosynthesis. Part of the gene cluster that mediates the biosynthesis of wortmanamides A and B, reduced long-chain polyketides amidated with a specific omega-amino acid, 5-aminopentanoic acid (5PA). The PKS modules of TwmB are involved in the synthesis of the polyketide backbone, whereas the non-canonical C domain of TwmB is a bonafide condensation domain that specifically selects 5PA and catalyzes amidation to release polyketide chain. The C domain clearly prefers C16 and C18 fatty acyl substrates, which is consistent with simultaneous formation of both octaketide and nonaketide acyl amides wortmanamides A and B. Because TwmB lacks a designated enoylreductase (ER) domain, the required activity is provided the enoyl reductase TwmE. The roles of the remaining enzymes have still to be clarified. The chain is Wortmanamides biosynthesis cluster protein C from Talaromyces wortmannii (Penicillium wortmannii).